We begin with the raw amino-acid sequence, 346 residues long: UDP-3-O-acylglucosamine N-acyltransferase (346 aa).

The Proton acceptor role is filled by histidine 240.

This sequence belongs to the transferase hexapeptide repeat family. LpxD subfamily. In terms of assembly, homotrimer.

The enzyme catalyses a UDP-3-O-[(3R)-3-hydroxyacyl]-alpha-D-glucosamine + a (3R)-hydroxyacyl-[ACP] = a UDP-2-N,3-O-bis[(3R)-3-hydroxyacyl]-alpha-D-glucosamine + holo-[ACP] + H(+). It functions in the pathway bacterial outer membrane biogenesis; LPS lipid A biosynthesis. Catalyzes the N-acylation of UDP-3-O-acylglucosamine using 3-hydroxyacyl-ACP as the acyl donor. Is involved in the biosynthesis of lipid A, a phosphorylated glycolipid that anchors the lipopolysaccharide to the outer membrane of the cell. The sequence is that of UDP-3-O-acylglucosamine N-acyltransferase from Bacteroides thetaiotaomicron (strain ATCC 29148 / DSM 2079 / JCM 5827 / CCUG 10774 / NCTC 10582 / VPI-5482 / E50).